We begin with the raw amino-acid sequence, 260 residues long: 3-methyl-2-oxobutanoate hydroxymethyltransferase (260 aa).

Residues aspartate 42 and aspartate 81 each contribute to the Mg(2+) site. 3-methyl-2-oxobutanoate-binding positions include 42-43, aspartate 81, and lysine 109; that span reads DS. Glutamate 111 is a binding site for Mg(2+). Glutamate 178 acts as the Proton acceptor in catalysis.

Belongs to the PanB family. Homodecamer; pentamer of dimers. Mg(2+) is required as a cofactor.

It is found in the cytoplasm. The catalysed reaction is 3-methyl-2-oxobutanoate + (6R)-5,10-methylene-5,6,7,8-tetrahydrofolate + H2O = 2-dehydropantoate + (6S)-5,6,7,8-tetrahydrofolate. It participates in cofactor biosynthesis; (R)-pantothenate biosynthesis; (R)-pantoate from 3-methyl-2-oxobutanoate: step 1/2. Catalyzes the reversible reaction in which hydroxymethyl group from 5,10-methylenetetrahydrofolate is transferred onto alpha-ketoisovalerate to form ketopantoate. This Vesicomyosocius okutanii subsp. Calyptogena okutanii (strain HA) protein is 3-methyl-2-oxobutanoate hydroxymethyltransferase.